Here is a 211-residue protein sequence, read N- to C-terminus: Redox-sensing transcriptional repressor Rex (211 aa).

The H-T-H motif DNA-binding region spans 17 to 56 (LYYRFVSSLKSKGIDRVNSKAISDALQIDSATIRRDFSYF). 91–96 (GVGNLG) provides a ligand contact to NAD(+).

The protein belongs to the transcriptional regulatory Rex family. As to quaternary structure, homodimer.

The protein localises to the cytoplasm. In terms of biological role, modulates transcription in response to changes in cellular NADH/NAD(+) redox state. In Staphylococcus aureus (strain Mu3 / ATCC 700698), this protein is Redox-sensing transcriptional repressor Rex.